A 346-amino-acid polypeptide reads, in one-letter code: Phosphoribosylformylglycinamidine cyclo-ligase (346 aa).

Belongs to the AIR synthase family.

The protein localises to the cytoplasm. The enzyme catalyses 2-formamido-N(1)-(5-O-phospho-beta-D-ribosyl)acetamidine + ATP = 5-amino-1-(5-phospho-beta-D-ribosyl)imidazole + ADP + phosphate + H(+). It functions in the pathway purine metabolism; IMP biosynthesis via de novo pathway; 5-amino-1-(5-phospho-D-ribosyl)imidazole from N(2)-formyl-N(1)-(5-phospho-D-ribosyl)glycinamide: step 2/2. This chain is Phosphoribosylformylglycinamidine cyclo-ligase, found in Vibrio parahaemolyticus serotype O3:K6 (strain RIMD 2210633).